Reading from the N-terminus, the 146-residue chain is Phosphoribosyl-AMP cyclohydrolase (146 aa).

Asp-95 contributes to the Mg(2+) binding site. Cys-96 is a binding site for Zn(2+). Residues Asp-97 and Asp-99 each coordinate Mg(2+). Residues Cys-112 and Cys-119 each coordinate Zn(2+).

This sequence belongs to the PRA-CH family. In terms of assembly, homodimer. Mg(2+) serves as cofactor. Zn(2+) is required as a cofactor.

It is found in the cytoplasm. The catalysed reaction is 1-(5-phospho-beta-D-ribosyl)-5'-AMP + H2O = 1-(5-phospho-beta-D-ribosyl)-5-[(5-phospho-beta-D-ribosylamino)methylideneamino]imidazole-4-carboxamide. It functions in the pathway amino-acid biosynthesis; L-histidine biosynthesis; L-histidine from 5-phospho-alpha-D-ribose 1-diphosphate: step 3/9. Its function is as follows. Catalyzes the hydrolysis of the adenine ring of phosphoribosyl-AMP. The polypeptide is Phosphoribosyl-AMP cyclohydrolase (Chromohalobacter salexigens (strain ATCC BAA-138 / DSM 3043 / CIP 106854 / NCIMB 13768 / 1H11)).